The primary structure comprises 82 residues: RNA-binding protein TTE2299 (82 aa).

Belongs to the eukaryotic ribosomal protein eL8 family.

This is RNA-binding protein TTE2299 from Caldanaerobacter subterraneus subsp. tengcongensis (strain DSM 15242 / JCM 11007 / NBRC 100824 / MB4) (Thermoanaerobacter tengcongensis).